A 164-amino-acid polypeptide reads, in one-letter code: FMN reductase (NADH) RutF (164 aa).

Belongs to the non-flavoprotein flavin reductase family. RutF subfamily.

It carries out the reaction FMNH2 + NAD(+) = FMN + NADH + 2 H(+). Functionally, catalyzes the reduction of FMN to FMNH2 which is used to reduce pyrimidine by RutA via the Rut pathway. The chain is FMN reductase (NADH) RutF from Escherichia coli O150:H5 (strain SE15).